The chain runs to 582 residues: Phosphoribosylaminoimidazole carboxylase (582 aa).

An ATP-grasp domain is found at 114–305 (KKYLAERGVA…QFENHLRAIL (192 aa)). ATP is bound at residue 143 to 200 (AGRLGLPLMLKAKTLAYDGRGNSPLKSASSGDIQASLKFLGDRPLYAEGWAPFVKEVA).

This sequence in the C-terminal section; belongs to the AIR carboxylase family. Class I subfamily.

It catalyses the reaction 5-amino-1-(5-phospho-D-ribosyl)imidazole-4-carboxylate + H(+) = 5-amino-1-(5-phospho-beta-D-ribosyl)imidazole + CO2. Its pathway is purine metabolism; IMP biosynthesis via de novo pathway; 5-amino-1-(5-phospho-D-ribosyl)imidazole-4-carboxylate from 5-amino-1-(5-phospho-D-ribosyl)imidazole (carboxylase route): step 1/1. The chain is Phosphoribosylaminoimidazole carboxylase (ADE2) from Cryptococcus neoformans var. neoformans serotype D (strain JEC21 / ATCC MYA-565) (Filobasidiella neoformans).